The chain runs to 270 residues: MSDLHNESIFITGGGSGLGLALVERFIEEGAQVATLELSAAKVASLRQRFGEHILAVEGNVTCYADYQRAVDQILTRSGKLDCFIGNAGIWDHNASLVNTPAETLETGFHELFNVNVLGYLLGAKACAPALIAGEGSMIFTLSNAAWYPGGGGPLYTASKHAATGLIRQLAYELAPKVRVNGVGPCGMASDLRGPQALGQSETSIMQSLTPEKIAAILPLQFFPQPADFTGPYVMLASRRNNRALSGVMINADAGLAIRGIRHVAAGLDL.

10-34 (FITGGGSGLGLALVERFIEEGAQVA) serves as a coordination point for NAD(+). Ser-143 lines the substrate pocket. Tyr-156 acts as the Proton acceptor in catalysis.

Belongs to the short-chain dehydrogenases/reductases (SDR) family.

It catalyses the reaction 3-(cis-5,6-dihydroxycyclohexa-1,3-dien-1-yl)propanoate + NAD(+) = 3-(2,3-dihydroxyphenyl)propanoate + NADH + H(+). It carries out the reaction (2E)-3-(cis-5,6-dihydroxycyclohexa-1,3-dien-1-yl)prop-2-enoate + NAD(+) = (2E)-3-(2,3-dihydroxyphenyl)prop-2-enoate + NADH + H(+). It participates in aromatic compound metabolism; 3-phenylpropanoate degradation. Converts 3-phenylpropionate-dihydrodiol (PP-dihydrodiol) and cinnamic acid-dihydrodiol (CI-dihydrodiol) into 3-(2,3-dihydroxylphenyl)propanoic acid (DHPP) and 2,3-dihydroxicinnamic acid (DHCI), respectively. This Escherichia coli O157:H7 protein is 3-phenylpropionate-dihydrodiol/cinnamic acid-dihydrodiol dehydrogenase.